A 408-amino-acid polypeptide reads, in one-letter code: Type II methyltransferase M.VspI (408 aa).

It belongs to the N(4)/N(6)-methyltransferase family.

It carries out the reaction a 2'-deoxyadenosine in DNA + S-adenosyl-L-methionine = an N(6)-methyl-2'-deoxyadenosine in DNA + S-adenosyl-L-homocysteine + H(+). In terms of biological role, a gamma subtype methylase, recognizes the double-stranded sequence 5'-ATTAAT-3', methylates A-5 on both strands, and protects the DNA from cleavage by the VspI endonuclease. In Vibrio sp. (strain 343), this protein is Type II methyltransferase M.VspI.